Consider the following 588-residue polypeptide: Outer membrane transporter CdiB (588 aa).

The POTRA domain maps to 104–179 (FTVSSIVVSG…GVLHITVMEG (76 aa)).

This sequence belongs to the TPS (TC 1.B.20) family.

It localises to the cell outer membrane. Functionally, potential outer membrane protein component of a toxin-immunity protein module, which functions as a cellular contact-dependent growth inhibition (CDI) system. CDI modules allow bacteria to communicate with and inhibit the growth of closely related neighboring bacteria in a contact-dependent fashion. This protein may be required for secretion and assembly of the CdiA toxin protein. Inhibitory cells must be in logarithmic (not stationary) phase to inhibit growth of their targets, while the presence of P or S but not type 1 pili protects the target cells against growth inhibition. Its function is as follows. Probable member of a two partner secretion pathway (TPS) in which it mediates the secretion of CdiA. The sequence is that of Outer membrane transporter CdiB from Escherichia coli.